The primary structure comprises 511 residues: 2'-acyl-2-O-sulfo-trehalose (hydroxy)phthioceranyltransferase PapA1 (511 aa).

It belongs to the PapA acyltransferase family.

The catalysed reaction is a (hydroxy)phthioceranyl-[(hydroxy)phthioceranic acid synthase] + 2'-palmitoyl/stearoyl-2-O-sulfo-alpha,alpha-trehalose = a 3'-(hydroxy)phthioceranyl-2'-palmitoyl/stearoyl-2-O-sulfo-alpha,alpha-trehalose + holo-[(hydroxy)phthioceranic acid synthase].. Its function is as follows. Required for the biosynthesis of sulfolipid-1 (SL-1), a major mycobacterial cell wall lipid. Catalyzes the acylation of trehalose-2-sulfate-2'-palmitate (SL659) by adding the (hydroxy)phthioceranoyl group at the 3'-position to yield the diacylated intermediate 2-palmitoyl-3-(C43)-phthioceranyl-alpha, alpha'-D-trehalose-2'-sulfate (SL1278). The sequence is that of 2'-acyl-2-O-sulfo-trehalose (hydroxy)phthioceranyltransferase PapA1 (papA1) from Mycobacterium tuberculosis (strain CDC 1551 / Oshkosh).